The following is a 489-amino-acid chain: Ulvan Lyase-PL25 (489 aa).

A signal peptide spans 1–31 (MNLNKTLRKNSPSGYKALLTFSIICGLMATG). Cysteine 32 carries N-palmitoyl cysteine lipidation. The S-diacylglycerol cysteine moiety is linked to residue cysteine 32. Asparagine 60 and asparagine 122 together coordinate substrate. Residue histidine 123 is the Proton donor of the active site. Residues lysine 125 and histidine 143 each coordinate substrate. Tyrosine 188 (proton acceptor) is an active-site residue. Substrate is bound by residues arginine 204, histidine 208, and tyrosine 246. Zn(2+) is bound at residue histidine 208. Zn(2+) is bound by residues histidine 264, cysteine 266, and histidine 278. Histidine 278 provides a ligand contact to substrate.

This sequence belongs to the polysaccharide lyase 25 family.

The protein resides in the cell membrane. Its function is as follows. Ulvan lyase involved in ulvan degradation. Ulvan is the main polysaccharide component of the Ulvales (green seaweed) cell wall. It is composed of disaccharide building blocks comprising 3-sulfated rhamnose (Rha3S) linked to D-glucuronic acid (GlcA), L-iduronic acid (IduA), or D-xylose (Xyl). Ulvan lyase catalyzes the endolytic cleavage of the glycosidic bond between Rha3S and the uronic acids GlcA or IduA, producing oligosaccharides that have unsaturated 4-deoxy-L-threo-hex-4-enopyranosiduronic acid (deltaUA) at the non-reducing end. This results eventually in the degradation of the ulvan polysaccharide into deltaUA-Rha3S disaccharides and deltaUA-Rha3S-Xyl-Rha3S tetrasaccharides. In Pseudoalteromonas sp. (strain PLSV), this protein is Ulvan Lyase-PL25.